We begin with the raw amino-acid sequence, 160 residues long: Large ribosomal subunit protein eL21B (160 aa).

Residue lysine 32 forms a Glycyl lysine isopeptide (Lys-Gly) (interchain with G-Cter in ubiquitin) linkage.

It belongs to the eukaryotic ribosomal protein eL21 family. Component of the large ribosomal subunit (LSU). Mature yeast ribosomes consist of a small (40S) and a large (60S) subunit. The 40S small subunit contains 1 molecule of ribosomal RNA (18S rRNA) and 33 different proteins (encoded by 57 genes). The large 60S subunit contains 3 rRNA molecules (25S, 5.8S and 5S rRNA) and 46 different proteins (encoded by 81 genes).

It localises to the cytoplasm. Component of the ribosome, a large ribonucleoprotein complex responsible for the synthesis of proteins in the cell. The small ribosomal subunit (SSU) binds messenger RNAs (mRNAs) and translates the encoded message by selecting cognate aminoacyl-transfer RNA (tRNA) molecules. The large subunit (LSU) contains the ribosomal catalytic site termed the peptidyl transferase center (PTC), which catalyzes the formation of peptide bonds, thereby polymerizing the amino acids delivered by tRNAs into a polypeptide chain. The nascent polypeptides leave the ribosome through a tunnel in the LSU and interact with protein factors that function in enzymatic processing, targeting, and the membrane insertion of nascent chains at the exit of the ribosomal tunnel. In Saccharomyces cerevisiae (strain ATCC 204508 / S288c) (Baker's yeast), this protein is Large ribosomal subunit protein eL21B.